Reading from the N-terminus, the 174-residue chain is Superoxide dismutase [Cu-Zn] (174 aa).

A signal peptide spans 1 to 20; that stretch reads MMKSLFIASTMVLMAFPAFA. The Cu cation site is built by histidine 68, histidine 70, and histidine 93. Cysteine 75 and cysteine 170 are disulfide-bonded. Zn(2+) is bound by residues histidine 93, histidine 102, histidine 110, and aspartate 113. Residue histidine 148 coordinates Cu cation.

It belongs to the Cu-Zn superoxide dismutase family. Homodimer. Cu cation is required as a cofactor. Zn(2+) serves as cofactor.

The protein resides in the periplasm. The catalysed reaction is 2 superoxide + 2 H(+) = H2O2 + O2. Functionally, destroys radicals which are normally produced within the cells and which are toxic to biological systems. The protein is Superoxide dismutase [Cu-Zn] (sodC) of Brucella melitensis biotype 1 (strain ATCC 23456 / CCUG 17765 / NCTC 10094 / 16M).